A 407-amino-acid polypeptide reads, in one-letter code: uncharacterized protein (407 aa).

A Glycyl lysine isopeptide (Lys-Gly) (interchain with G-Cter in ubiquitin) cross-link involves residue Lys22.

The protein belongs to the SVF1 family.

The protein resides in the cytoplasm. This is an uncharacterized protein from Saccharomyces cerevisiae (strain ATCC 204508 / S288c) (Baker's yeast).